A 371-amino-acid polypeptide reads, in one-letter code: Alanine dehydrogenase (371 aa).

Positions 15 and 75 each coordinate substrate. Histidine 96 (proton donor/acceptor) is an active-site residue. NAD(+) is bound by residues serine 134, 178 to 179, aspartate 198, serine 220, 239 to 240, 267 to 270, arginine 279, and 298 to 301; these read TA, VL, IAID, and VANM. Aspartate 270 (proton donor/acceptor) is an active-site residue.

The protein belongs to the AlaDH/PNT family. In terms of assembly, homohexamer. Trimer of dimers.

It localises to the cytoplasm. The catalysed reaction is L-alanine + NAD(+) + H2O = pyruvate + NH4(+) + NADH + H(+). It participates in amino-acid degradation; L-alanine degradation via dehydrogenase pathway; NH(3) and pyruvate from L-alanine: step 1/1. In terms of biological role, catalyzes the reversible reductive amination of pyruvate to L-alanine. Required for proficient utilization of D- or L-alanine as a nitrogen source. May be required for the adaptation from aerobic growth to anaerobic dormancy. It could be involved in the maintenance of the NAD pool during the shift to an anaerobic dormant state in which oxygen as a terminal electron acceptor becomes limiting. The chain is Alanine dehydrogenase from Mycolicibacterium smegmatis (strain ATCC 700084 / mc(2)155) (Mycobacterium smegmatis).